A 304-amino-acid polypeptide reads, in one-letter code: ATP phosphoribosyltransferase (304 aa).

It belongs to the ATP phosphoribosyltransferase family. Long subfamily. Requires Mg(2+) as cofactor.

Its subcellular location is the cytoplasm. It carries out the reaction 1-(5-phospho-beta-D-ribosyl)-ATP + diphosphate = 5-phospho-alpha-D-ribose 1-diphosphate + ATP. Its pathway is amino-acid biosynthesis; L-histidine biosynthesis; L-histidine from 5-phospho-alpha-D-ribose 1-diphosphate: step 1/9. Its activity is regulated as follows. Feedback inhibited by histidine. Functionally, catalyzes the condensation of ATP and 5-phosphoribose 1-diphosphate to form N'-(5'-phosphoribosyl)-ATP (PR-ATP). Has a crucial role in the pathway because the rate of histidine biosynthesis seems to be controlled primarily by regulation of HisG enzymatic activity. The polypeptide is ATP phosphoribosyltransferase (Xanthomonas campestris pv. campestris (strain 8004)).